Reading from the N-terminus, the 849-residue chain is Villin-1 (849 aa).

5 Gelsolin-like repeats span residues 30-107 (IEKS…DKFL), 147-213 (RVTE…EDGK), 262-335 (VPVE…TVEF), 405-475 (QEQL…PEMF), and 527-566 (AIQVDLAASSLNSSHCYILQAGGSFFTWLGSLSSPSDHNL). The interval 739-849 (ETPERSLRKS…AVATGTPRRL (111 aa)) is disordered. Composition is skewed to low complexity over residues 747–782 (KSSSSSLPRRSPGTSSSEPTTPEQRAAARTFASAST) and 791–823 (PAALSPSLSTPSPSPRSRSSASSSPASWNSTPS).

This sequence belongs to the villin/gelsolin family.

It localises to the cytoplasm. It is found in the cytoskeleton. Ca(2+)-independent actin-binding protein. Binds actin microfilaments (MFs). Involved in actin filament bundling, severing and capping. Caps the barbed end of actin filaments and protects them from disassembly. Promotes VLN3-mediated MF severing. This is Villin-1 from Oryza sativa subsp. indica (Rice).